Reading from the N-terminus, the 139-residue chain is Natriuretic peptide Mc-NP (139 aa).

The signal sequence occupies residues 1 to 25; that stretch reads MVGLSRLRGGGLLLVLALLPLALDG. A propeptide spanning residues 26-75 is cleaved from the precursor; the sequence is KPLEEAPTAPSRIIPFSRPVRKQSQAVLDPMVHPERPAGSGDDGDSRRLE. The segment at 45 to 72 is disordered; it reads VRKQSQAVLDPMVHPERPAGSGDDGDSR. A disulfide bridge links Cys-86 with Cys-102. A propeptide spanning residues 117 to 139 is cleaved from the precursor; the sequence is IIPFSRPVRKESRAALDRMQQPG.

This sequence belongs to the natriuretic peptide family. In terms of tissue distribution, expressed by the venom gland.

It localises to the secreted. In terms of biological role, snake venom natriuretic peptide that dose-dependently induces the rapid relaxation of rat aortic strips phenylephrine-precontracted. Acts by stimulating cGMP production in a dose-dependent manner (by probably activating NPR1 and/or NPR2). May also show potent hypotensive effects. A synthetic peptide (AA 77-108, where the Cys-95 is replaced by a Ser) increases sodium excretion and urinary volume in rat kidneys. The chain is Natriuretic peptide Mc-NP from Micrurus corallinus (Brazilian coral snake).